Here is a 120-residue protein sequence, read N- to C-terminus: Large ribosomal subunit protein bL20 (120 aa).

It belongs to the bacterial ribosomal protein bL20 family.

Functionally, binds directly to 23S ribosomal RNA and is necessary for the in vitro assembly process of the 50S ribosomal subunit. It is not involved in the protein synthesizing functions of that subunit. The polypeptide is Large ribosomal subunit protein bL20 (Desulfitobacterium hafniense (strain DSM 10664 / DCB-2)).